Here is a 347-residue protein sequence, read N- to C-terminus: 3-isopropylmalate dehydrogenase (347 aa).

Residue 76–87 (GPKWTDPNNRPE) coordinates NAD(+). Substrate-binding residues include Arg94, Arg104, Arg132, and Asp217. Asp217, Asp241, and Asp245 together coordinate Mg(2+). 275 to 287 (GSAPDIANEDKAN) provides a ligand contact to NAD(+).

This sequence belongs to the isocitrate and isopropylmalate dehydrogenases family. LeuB type 1 subfamily. As to quaternary structure, homodimer. Mg(2+) serves as cofactor. The cofactor is Mn(2+).

The protein localises to the cytoplasm. The catalysed reaction is (2R,3S)-3-isopropylmalate + NAD(+) = 4-methyl-2-oxopentanoate + CO2 + NADH. Its pathway is amino-acid biosynthesis; L-leucine biosynthesis; L-leucine from 3-methyl-2-oxobutanoate: step 3/4. In terms of biological role, catalyzes the oxidation of 3-carboxy-2-hydroxy-4-methylpentanoate (3-isopropylmalate) to 3-carboxy-4-methyl-2-oxopentanoate. The product decarboxylates to 4-methyl-2 oxopentanoate. This Staphylococcus epidermidis (strain ATCC 12228 / FDA PCI 1200) protein is 3-isopropylmalate dehydrogenase.